Here is a 536-residue protein sequence, read N- to C-terminus: MSNKNNLRYALGALALSVSAASLAAPSEAQQFTEFWTPGKPNPSICKSPLLVSTPLGLPRCLQASNVVKRLQKLEDIASLNDGNRAAATPGYQASVDYVKQTLQKAGYKVSVQPFPFTAYYPKGPGSLSATVPQPVTYEWEKDFTYLSQTEAGDVTAKVVPVDLSLGAGNTSTSGCEAEDFANFPAGSIALIQRGTCNFEQKAENAAAAGAAGVIIFNQGNTDDRKGLENVTVGESYEGGIPVIFATYDNGVAWSQTPDLQLHLVVDVVRKKTETYNVVAETRRGNPNNVVMVGAHLDSVFEGPGINDNGSGSAAQLEMAVLLAKALPVNKVRFAWWGAEEAGLVGSTHYVQNLAPEEKKKIKAYLNFDMIGSPNFGNFIYDGDGSDFGLQGPPGSAAIERLFEAYFRLRGQQSEGTEIDFRSDYAEFFNSGIAFGGLFTGAEGLKTEEQAQKYGGTAGKAYDECYHSKCDGIANINQDALEIHSDAMAFVTSWLSLSTKVVDDEIAAAGQKAQSRSLQMQKSASQIERWGHDFIK.

A signal peptide spans 1 to 24 (MSNKNNLRYALGALALSVSAASLA). Positions 152–255 (AGDVTAKVVP…ATYDNGVAWS (104 aa)) constitute a PA domain. Threonine 196 carries the phosphothreonine modification. Histidine 296 and aspartate 308 together coordinate Zn(2+). Glutamate 340 functions as the Proton acceptor in the catalytic mechanism. The Zn(2+) site is built by glutamate 341, aspartate 369, and histidine 467. Cysteines 465 and 470 form a disulfide.

The protein belongs to the peptidase M28 family. M28A subfamily. It depends on Zn(2+) as a cofactor.

The protein localises to the secreted. The enzyme catalyses Release of an N-terminal amino acid, Xaa-|-Yaa-, in which Xaa is preferably Leu, but may be other amino acids including Pro although not Arg or Lys, and Yaa may be Pro. Amino acid amides and methyl esters are also readily hydrolyzed, but rates on arylamides are exceedingly low.. A secreted aminopeptidase. Acts on free N-terminal amino groups with a very strong preference for Leu in the first position. This chain is Aminopeptidase, found in Pseudomonas aeruginosa (strain UCBPP-PA14).